The following is a 415-amino-acid chain: Homoserine O-succinyltransferase (415 aa).

One can recognise an AB hydrolase-1 domain in the interval Asn69–Asp383. Residue Ser175 is the Nucleophile of the active site. Arg245 is a substrate binding site. Catalysis depends on residues Asp344 and His377. Asp378 contributes to the substrate binding site.

The protein belongs to the AB hydrolase superfamily. MetX family. As to quaternary structure, homodimer.

The protein localises to the cytoplasm. It catalyses the reaction L-homoserine + succinyl-CoA = O-succinyl-L-homoserine + CoA. Its pathway is amino-acid biosynthesis; L-methionine biosynthesis via de novo pathway; O-succinyl-L-homoserine from L-homoserine: step 1/1. Its function is as follows. Transfers a succinyl group from succinyl-CoA to L-homoserine, forming succinyl-L-homoserine. This is Homoserine O-succinyltransferase from Bordetella parapertussis (strain 12822 / ATCC BAA-587 / NCTC 13253).